The primary structure comprises 372 residues: GTPase Obg (372 aa).

In terms of domain architecture, Obg spans 1–159; sequence MKFIDEARIE…RMLKLELKVL (159 aa). The segment at 128 to 147 is disordered; it reads LHFKSSTNRAPRQKTDGKPG. In terms of domain architecture, OBG-type G spans 160 to 334; the sequence is ADVGLLGMPN…LVYAIHDYLV (175 aa). GTP is bound by residues 166–173, 191–195, 213–216, 284–287, and 315–317; these read GMPNAGKS, FTTLA, DIPG, NKLD, and SAL. Residues Ser173 and Thr193 each coordinate Mg(2+).

It belongs to the TRAFAC class OBG-HflX-like GTPase superfamily. OBG GTPase family. As to quaternary structure, monomer. Mg(2+) is required as a cofactor.

It localises to the cytoplasm. Its function is as follows. An essential GTPase which binds GTP, GDP and possibly (p)ppGpp with moderate affinity, with high nucleotide exchange rates and a fairly low GTP hydrolysis rate. Plays a role in control of the cell cycle, stress response, ribosome biogenesis and in those bacteria that undergo differentiation, in morphogenesis control. This Burkholderia mallei (strain NCTC 10247) protein is GTPase Obg.